Reading from the N-terminus, the 256-residue chain is C-8 sterol isomerase (256 aa).

Residues 1 to 31 are disordered; it reads MPPKKQSSSGGNKPSGSGSSSGRSSSGSSCR. Residues 7–30 show a composition bias toward low complexity; sequence SSSGGNKPSGSGSSSGRSSSGSSC. Residues 40–60 form a helical membrane-spanning segment; the sequence is IGGWLKFFAILFALVAPIAYV.

This sequence belongs to the ERG2 family.

It is found in the endoplasmic reticulum membrane. The protein operates within steroid metabolism; ergosterol biosynthesis; ergosterol from zymosterol: step 2/5. Its function is as follows. Catalyzes the reaction which results in unsaturation at C-7 in the B ring of sterols. The protein is C-8 sterol isomerase (erg-1) of Neurospora crassa (strain ATCC 24698 / 74-OR23-1A / CBS 708.71 / DSM 1257 / FGSC 987).